The primary structure comprises 261 residues: Basic leucine zipper 19 (261 aa).

2 disordered regions span residues 1-22 and 74-100; these read MEDG…MGEL and ESDE…LGNR. The segment covering 8–18 has biased composition (polar residues); it reads FSNQEVFSSSE. The span at 88–100 shows a compositional bias: basic and acidic residues; sequence CGKKGEKRPLGNR. In terms of domain architecture, bZIP spans 89-155; sequence GKKGEKRPLG…SRLKCLLVDL (67 aa). Residues 90 to 113 are basic motif; sequence KKGEKRPLGNREAVRKYREKKKAK. The interval 117–131 is leucine-zipper; it reads LEDEVARLRAVNQQL. Residues 237–248 show a composition bias toward low complexity; sequence NGSFSNVNTSVS. Positions 237-261 are disordered; that stretch reads NGSFSNVNTSVSNKRKGGHRASRAV. A compositionally biased stretch (basic residues) spans 249 to 261; the sequence is NKRKGGHRASRAV.

The protein resides in the nucleus. In terms of biological role, transcription factor involved in the response to zinc ion deficiency. Binds to the consensus sequence 5'-[AG]TGTCGACA[CT]-3' also called zinc deficiency response element (ZDRE). The ZDRE sequence is conserved in the plant kingdom and present in the promoters of genes that constitute the primary response to zinc deficiency, comprising additional ZIP metal transporter genes. Required for zinc accumulation in roots. Mediates the expression of the zinc transporters ZIP3, ZIP4, ZIP5 and ZIP9 during growth in zinc-deficient conditions. ZIP9 transporter is involved in zinc uptake in roots. The sequence is that of Basic leucine zipper 19 from Arabidopsis thaliana (Mouse-ear cress).